A 274-amino-acid chain; its full sequence is Trypsin-1 (274 aa).

The signal sequence occupies residues 1 to 18; it reads MSNKIAILLAVLVAVVAC. A propeptide spans 19 to 47 (activation peptide); it reads AEAQANQRHRLVRPSPSFSPRPRYAVGQR. The region spanning 48 to 273 is the Peptidase S1 domain; it reads IVGGFEIDVS…VRDWVRENSG (226 aa). The cysteines at positions 73 and 89 are disulfide-linked. Active-site charge relay system residues include His88 and Asp133. Cystine bridges form between Cys198/Cys214 and Cys225/Cys249. The active-site Charge relay system is the Ser229.

It belongs to the peptidase S1 family. Constitutively expressed at low level in the gut of adult females. Also expressed in the gut of male and female pupae.

The protein resides in the secreted. It carries out the reaction Preferential cleavage: Arg-|-Xaa, Lys-|-Xaa.. Major function may be to aid in digestion of the blood meal. This is Trypsin-1 (TRYP1) from Anopheles gambiae (African malaria mosquito).